A 1480-amino-acid chain; its full sequence is Cystic fibrosis transmembrane conductance regulator (1480 aa).

At 1-77 (MQRSPLEKAS…KLINALRRCF (77 aa)) the chain is on the cytoplasmic side. A helical transmembrane segment spans residues 78–98 (FWRFMFYGIFLYLGEVTKAVQ). The ABC transmembrane type-1 1 domain maps to 81 to 365 (FMFYGIFLYL…WAVQTWYDSL (285 aa)). The Extracellular segment spans residues 99–122 (PLLLGRIIASYDPDNKEERSIAIY). Residues 123–146 (LGIGLCLLFIVRTLLLHPAIFGLH) traverse the membrane as a helical segment. Residues 147-195 (HIGMQMRIAMFSLIYKKTLKLSSRVLDKISIGQLVSLLSNNLNKFDEGL) lie on the Cytoplasmic side of the membrane. A helical membrane pass occupies residues 196-216 (ALAHFVWIAPLQVALLMGLIW). Topologically, residues 217 to 222 (ELLQAS) are extracellular. The helical transmembrane segment at 223–243 (AFCGLGFLIVLALFQAGLGRM) threads the bilayer. The Cytoplasmic segment spans residues 244–298 (MMKYRDQRAGKISERLVITSEMIENIQSVKAYCWEEAMEKMIENLRQTELKLTRK). The helical transmembrane segment at 299 to 319 (AAYVRYFNSSAFFFSGFFVVF) threads the bilayer. At 320 to 339 (LSVLPYALIKGIILRKIFTT) the chain is on the extracellular side. A helical membrane pass occupies residues 340 to 358 (ISFCIVLRMAVTRQFPWAV). Topologically, residues 359–858 (QTWYDSLGAI…YLRYITVHKS (500 aa)) are cytoplasmic. Residues tryptophan 401, serine 434, 458-465 (GSTGAGKT), and glutamine 493 contribute to the ATP site. In terms of domain architecture, ABC transporter 1 spans 423-646 (NGDDSLFFSN…QPDFSSKLMG (224 aa)). Residue cysteine 524 is the site of S-palmitoyl cysteine attachment. Serine 549 bears the Phosphoserine mark. The disordered R region stretch occupies residues 654 to 831 (SAERRNSILT…EEINEEDLKE (178 aa)). Residues serine 660 and serine 670 each carry the phosphoserine; by PKA modification. Serine 686 carries the post-translational modification Phosphoserine; by PKC. Lysine 688 participates in a covalent cross-link: Glycyl lysine isopeptide (Lys-Gly) (interchain with G-Cter in ubiquitin). 2 positions are modified to phosphoserine; by PKA: serine 700 and serine 712. Phosphothreonine is present on threonine 717. 3 positions are modified to phosphoserine; by PKA: serine 737, serine 753, and serine 768. A Phosphoserine; by PKC modification is found at serine 790. Serine 795 and serine 813 each carry phosphoserine; by PKA. A helical transmembrane segment spans residues 859 to 879 (LIFVLIWCLVIFLAEVAASLV). The 297-residue stretch at 859–1155 (LIFVLIWCLV…AVNSSIDVDS (297 aa)) folds into the ABC transmembrane type-1 2 domain. Residues 880 to 918 (VLWLLGNTPLQDKGNSTHSRNNSYAVIITSTSSYYVFYI) are Extracellular-facing. 2 N-linked (GlcNAc...) asparagine glycosylation sites follow: asparagine 894 and asparagine 900. A discontinuously helical transmembrane segment spans residues 919 to 939 (YVGVADTLLAMGFFRGLPLVH). Topologically, residues 940–990 (TLITVSKILHHKMLHSVLQAPMSTLNTLKAGGILNRFSKDIAILDDLLPLT) are cytoplasmic. A helical transmembrane segment spans residues 991 to 1011 (IFDFIQLLLIVIGAIAVVAVL). Residues 1012–1013 (QP) are Extracellular-facing. The chain crosses the membrane as a helical span at residues 1014 to 1034 (YIFVATVPVIVAFIMLRAYFL). Residues 1035–1095 (QTSQQLKQLE…TANWFLYLST (61 aa)) are Cytoplasmic-facing. The helical transmembrane segment at 1096–1116 (LRWFQMRIEMIFVIFFIAVTF) threads the bilayer. Topologically, residues 1117-1130 (ISILTTGEGEGRVG) are extracellular. The helical transmembrane segment at 1131–1151 (IILTLAMNIMSTLQWAVNSSI) threads the bilayer. At 1152–1480 (DVDSLMRSVS…TEEEVQDTRL (329 aa)) the chain is on the cytoplasmic side. The ABC transporter 2 domain occupies 1210–1443 (MTVKDLTAKY…RSLFRQAISP (234 aa)). ATP contacts are provided by residues tyrosine 1219 and 1244 to 1251 (GRTGSGKS). The tract at residues 1386-1480 (RTLKQAFADC…TEEEVQDTRL (95 aa)) is interaction with GORASP2. The S-palmitoyl cysteine moiety is linked to residue cysteine 1395. Phosphoserine occurs at positions 1444 and 1456. Positions 1452–1480 (HRNSSKCKSKPQIAALKEETEEEVQDTRL) are disordered. The segment covering 1470–1480 (ETEEEVQDTRL) has biased composition (acidic residues). Residues 1478–1480 (TRL) carry the PDZ-binding motif.

It belongs to the ABC transporter superfamily. ABCC family. CFTR transporter (TC 3.A.1.202) subfamily. Monomer; does not require oligomerization for channel activity. May form oligomers in the membrane. Interacts with SLC26A3, SLC26A6 and SHANK2. Interacts with NHERF1 and MYO6. Interacts (via C-terminus) with GOPC (via PDZ domain); this promotes CFTR internalization and thereby decreases channel activity. Interacts with SLC4A7 through NHERF1. Found in a complex with MYO5B and RAB11A. Interacts with ANO1. Interacts with SLC26A8. Interacts with AHCYL1; the interaction increases CFTR activity. Interacts with CSE1L. The core-glycosylated form interacts with GORASP2 (via PDZ GRASP-type 1 domain) in respone to ER stress. Interacts with MARCHF2; the interaction leads to CFTR ubiqtuitination and degradation. Interacts with ADGRG2. N-glycosylated. In terms of processing, phosphorylated; cAMP treatment promotes phosphorylation and activates the channel. Dephosphorylation decreases the ATPase activity (in vitro). Phosphorylation at PKA sites activates the channel. Phosphorylation at PKC sites enhances the response to phosphorylation by PKA. Phosphorylated by AMPK; this inhibits channel activity. Post-translationally, ubiquitinated, leading to its degradation in the lysosome. Deubiquitination by USP10 in early endosomes enhances its endocytic recycling to the cell membrane. Ubiquitinated by RNF185 during ER stress. Ubiquitinated by MARCHF2. In terms of tissue distribution, expressed in the respiratory airway, including bronchial epithelium, and in the female reproductive tract, including oviduct (at protein level). Detected in pancreatic intercalated ducts in the exocrine tissue, on epithelial cells in intralobular striated ducts in sublingual salivary glands, on apical membranes of crypt cells throughout the small and large intestine, and on the reabsorptive duct in eccrine sweat glands. Detected on the equatorial segment of the sperm head (at protein level). Detected in nasal and bronchial superficial epithelium. Expressed by the central cells on the sebaceous glands, dermal adipocytes and, at lower levels, by epithelial cells.

It localises to the apical cell membrane. Its subcellular location is the early endosome membrane. The protein localises to the cell membrane. It is found in the recycling endosome membrane. The protein resides in the endoplasmic reticulum membrane. It localises to the nucleus. The enzyme catalyses ATP + H2O + closed Cl(-) channel = ADP + phosphate + open Cl(-) channel.. It catalyses the reaction chloride(in) = chloride(out). The catalysed reaction is hydrogencarbonate(in) = hydrogencarbonate(out). It carries out the reaction ATP + H2O = ADP + phosphate + H(+). Epithelial ion channel that plays an important role in the regulation of epithelial ion and water transport and fluid homeostasis. Mediates the transport of chloride ions across the cell membrane. Possesses an intrinsic ATPase activity and utilizes ATP to gate its channel; the passive flow of anions through the channel is gated by cycles of ATP binding and hydrolysis by the ATP-binding domains. The ion channel is also permeable to HCO(3)(-); selectivity depends on the extracellular chloride concentration. In vitro, mediates ATP-dependent glutathione flux. Exerts its function also by modulating the activity of other ion channels and transporters. Plays an important role in airway fluid homeostasis. Contributes to the regulation of the pH and the ion content of the airway surface fluid layer and thereby plays an important role in defense against pathogens. Modulates the activity of the epithelial sodium channel (ENaC) complex, in part by regulating the cell surface expression of the ENaC complex. Inhibits the activity of the ENaC channel containing subunits SCNN1A, SCNN1B and SCNN1G. Inhibits the activity of the ENaC channel containing subunits SCNN1D, SCNN1B and SCNN1G, but not of the ENaC channel containing subunits SCNN1A, SCNN1B and SCNN1G. May regulate bicarbonate secretion and salvage in epithelial cells by regulating the transporter SLC4A7. Can inhibit the chloride channel activity of ANO1. Plays a role in the chloride and bicarbonate homeostasis during sperm epididymal maturation and capacitation. The protein is Cystic fibrosis transmembrane conductance regulator of Homo sapiens (Human).